We begin with the raw amino-acid sequence, 511 residues long: 2-isopropylmalate synthase (511 aa).

One can recognise a Pyruvate carboxyltransferase domain in the interval 6 to 269; it reads IIIFDTTLRD…YTDIKCENIF (264 aa). Mn(2+) contacts are provided by Asp15, His203, His205, and Asn239. Residues 394–511 are regulatory domain; that stretch reads ILEKLSVISG…SLKVEERKMA (118 aa).

Belongs to the alpha-IPM synthase/homocitrate synthase family. LeuA type 1 subfamily. Homodimer. Mn(2+) is required as a cofactor.

The protein localises to the cytoplasm. The enzyme catalyses 3-methyl-2-oxobutanoate + acetyl-CoA + H2O = (2S)-2-isopropylmalate + CoA + H(+). It functions in the pathway amino-acid biosynthesis; L-leucine biosynthesis; L-leucine from 3-methyl-2-oxobutanoate: step 1/4. Catalyzes the condensation of the acetyl group of acetyl-CoA with 3-methyl-2-oxobutanoate (2-ketoisovalerate) to form 3-carboxy-3-hydroxy-4-methylpentanoate (2-isopropylmalate). The protein is 2-isopropylmalate synthase of Campylobacter jejuni subsp. jejuni serotype O:6 (strain 81116 / NCTC 11828).